The sequence spans 30 residues: U1-poneritoxin-Ni3d (30 aa).

It belongs to the ponericin-G family. In terms of tissue distribution, expressed by the venom gland.

The protein localises to the secreted. Functionally, has activity against some Gram-positive bacteria and S.cerevisiae. Has a non-hemolytic activity. The polypeptide is U1-poneritoxin-Ni3d (Neoponera inversa (Ant)).